Reading from the N-terminus, the 749-residue chain is Probable galactinol--sucrose galactosyltransferase 6 (749 aa).

Belongs to the glycosyl hydrolases 36 family.

The enzyme catalyses alpha-D-galactosyl-(1-&gt;3)-1D-myo-inositol + sucrose = raffinose + myo-inositol. Functionally, transglycosidase operating by a ping-pong reaction mechanism. Involved in the synthesis of raffinose, a major soluble carbohydrate in seeds, roots and tubers. The protein is Probable galactinol--sucrose galactosyltransferase 6 (RFS6) of Arabidopsis thaliana (Mouse-ear cress).